A 160-amino-acid polypeptide reads, in one-letter code: MGDVIVSISDFRVSNNVGDILVTYALGSCIAVAIYDPKVKVGGLLHYMLPDSSLDVDKAKTTPGMFADTGIPLLFKACYSLGAQKKSMIVKVAGGASILDDTNFFRIGQKNIMMARKMFWKNNVLINGEDTGSNCNRTVRLEIKTGKVFVKSSGGPLREL.

The protein belongs to the CheD family.

It carries out the reaction L-glutaminyl-[protein] + H2O = L-glutamyl-[protein] + NH4(+). Its function is as follows. Probably deamidates glutamine residues to glutamate on methyl-accepting chemotaxis receptors (MCPs), playing an important role in chemotaxis. This is Probable chemoreceptor glutamine deamidase CheD 1 from Syntrophus aciditrophicus (strain SB).